The chain runs to 577 residues: Arginine--tRNA ligase (577 aa).

The 'HIGH' region motif lies at 122-132 (PNVAKEMHVGH).

It belongs to the class-I aminoacyl-tRNA synthetase family. As to quaternary structure, monomer.

It localises to the cytoplasm. It carries out the reaction tRNA(Arg) + L-arginine + ATP = L-arginyl-tRNA(Arg) + AMP + diphosphate. In Vibrio vulnificus (strain CMCP6), this protein is Arginine--tRNA ligase.